We begin with the raw amino-acid sequence, 274 residues long: Probable starch degradation products transport system permease protein AmyC (274 aa).

Transmembrane regions (helical) follow at residues 11 to 31 (LTFL…IILV), 73 to 93 (LIIT…TAYA), 103 to 123 (VIIY…VMIP), 139 to 159 (LVFM…YGAL), 184 to 204 (IILP…IMWI), and 238 to 258 (WNLG…FYFL). The region spanning 69-259 (FSNTLIITVF…LPVVIFYFLA (191 aa)) is the ABC transmembrane type-1 domain.

It belongs to the binding-protein-dependent transport system permease family. MalFG subfamily.

It localises to the cell membrane. In terms of biological role, probably part of a binding-protein-dependent transport system starch degradation products. Probably responsible for the translocation of the substrate across the membrane. The chain is Probable starch degradation products transport system permease protein AmyC (amyC) from Thermoanaerobacterium thermosulfurigenes (Clostridium thermosulfurogenes).